Consider the following 453-residue polypeptide: UPF0210 protein Pcar_2119 (453 aa).

This sequence belongs to the UPF0210 family. As to quaternary structure, homodimer.

The polypeptide is UPF0210 protein Pcar_2119 (Syntrophotalea carbinolica (strain DSM 2380 / NBRC 103641 / GraBd1) (Pelobacter carbinolicus)).